The following is a 255-amino-acid chain: Tryptophan synthase alpha chain (255 aa).

Residues Glu-44 and Asp-55 each act as proton acceptor in the active site.

Belongs to the TrpA family. Tetramer of two alpha and two beta chains.

It catalyses the reaction (1S,2R)-1-C-(indol-3-yl)glycerol 3-phosphate + L-serine = D-glyceraldehyde 3-phosphate + L-tryptophan + H2O. It participates in amino-acid biosynthesis; L-tryptophan biosynthesis; L-tryptophan from chorismate: step 5/5. Functionally, the alpha subunit is responsible for the aldol cleavage of indoleglycerol phosphate to indole and glyceraldehyde 3-phosphate. The protein is Tryptophan synthase alpha chain of Dehalococcoides mccartyi (strain ATCC BAA-2100 / JCM 16839 / KCTC 5957 / BAV1).